The primary structure comprises 875 residues: MTNTKQKINAVFLSALMVMSVFAAAVAFSGAAAAANRGAGFTYSTGPTDSNGGGNGDSVGQVGPGAVVFQGEEDLEDGGNFGSNTDIGQLQKVSGDNSGILLGNPIPQDQPTGSYTFDGNSGTDGVTLQTPRVTSVEVQNGGSGDVTGSTLQTSSSGPDAFVRADYNFQEAEDLEITVEDENGLEVTNEIVVQKTGLPTADRNNDNGASGSNGDFDVGWELDTTDIDEGQYTITVEGTEDLTFGDASETVTVNITSDQQASLNLDNDEVVQGENLQFNVENSPEGNYHVVLVESSEFRDGITADQASRIFRNVGDVQEVGLVDNTGPVSASTVASNVGSDQEVADVTRYAYGVVEIDGGSGVGSIETQFLDDSSVDVELYPASDSSNDGYASGGSHASSVTVRDTDGDGTDDSEDAIVTDLLETDDDQSFDVVEGEITLDSPSGAYITGSQIDVNGTANQGVDQVALYARDNNDYELIEIDGSNTVSVDGDDTFSEEDVVLSQGSKGGNSIVSLPGSYRIGVIDVQDADLDSDGTVDDTLTTSDFNSGVSGATALRVTDTALNGTFTTYNGQIASDDGQIDVDGQAPGKDNVIVAFVDSRGNAAAQVVSVDDDDSFSEEDIDITSLSEGTVTAHILSSGRDGEYGDTGTSSDSAFVNTIETGYAGGSSTGDQVREQILANTVDDTASDDLIVNEQFRLTDGLTTIESVSSPVEANGTLEVQGNTNRVPDDNTITVEILNSEDESVTVESTDEWGSDGQWSVNVDLSDVDIEPGNYTVEADDGDNTDRTSVTVVEAGSLEEEQPDTETPEPDTETPEPDTETPEPDTETPEPDTETPEPDTETEEATTEASGPGFTAAIALIALVAAALLAVRRDN.

An N-terminal signal peptide occupies residues 1–23; the sequence is MTNTKQKINAVFLSALMVMSVFA. Over residues 137 to 157 the composition is skewed to polar residues; it reads EVQNGGSGDVTGSTLQTSSSG. 2 disordered regions span residues 137–158 and 197–217; these read EVQN…SSGP and LPTA…DFDV. The segment covering 205 to 216 has biased composition (low complexity); the sequence is DNGASGSNGDFD. N-linked (GlcNAc...) asparagine glycosylation occurs at Asn253. Positions 380–414 are disordered; the sequence is YPASDSSNDGYASGGSHASSVTVRDTDGDGTDDSE. Positions 383-402 are enriched in polar residues; sequence SDSSNDGYASGGSHASSVTV. Residues Asn455, Asn563, Asn715, and Asn774 are each glycosylated (N-linked (GlcNAc...) asparagine). A disordered region spans residues 794-852; it reads EAGSLEEEQPDTETPEPDTETPEPDTETPEPDTETPEPDTETPEPDTETEEATTEASGP. Residues 797-846 are compositionally biased toward acidic residues; the sequence is SLEEEQPDTETPEPDTETPEPDTETPEPDTETPEPDTETPEPDTETEEAT. A helical transmembrane segment spans residues 851–875; sequence GPGFTAAIALIALVAAALLAVRRDN. Positions 852–854 match the PGF sorting signal motif; sequence PGF.

Belongs to the halobacterial S-layer protein family. Asn-455 is glycosylated by a pentasaccharide comprising a hexose, 2 hexuronic acids, a methyl ester of a hexuronic acid and a final hexose. The complete pentasaccharide is first assembled on dolichol phosphate and then transferred the glycan to the target Asn. Post-translationally, cleaved by the archaeosortase ArtA at the C-terminus, with removal of a short hydrophobic segment. In terms of processing, lipidation.

Its subcellular location is the secreted. It is found in the cell wall. The protein resides in the S-layer. The protein localises to the cell membrane. In terms of biological role, S-layer protein. The S-layer is a paracrystalline mono-layered assembly of proteins which coat the surface of the cell. The sequence is that of Cell surface glycoprotein (csg1) from Haloarcula marismortui (strain ATCC 43049 / DSM 3752 / JCM 8966 / VKM B-1809) (Halobacterium marismortui).